A 238-amino-acid polypeptide reads, in one-letter code: MTRRYWNISLEEMMEAGVHFGHGTRKWNPRMAPYISAKRKGIHITNLTRTARFLSEACDLVFDAASRGKHFLIVGTKDKAADSVASAAIRARCHYVNKKWLGGMSTNWSTTETRLHKFRDLRVRAEMGQLSRLPKRDAAILKRQLSHFQTYLGGIKYMTGLPDIVIIIDQQEEYTALRECVTLGIPTICLIDTNCDPDLADIPIPANDDAIASIRLILNKLVSAICQGRSSYSYIRSR.

Belongs to the universal ribosomal protein uS2 family.

It is found in the plastid. The protein localises to the chloroplast. This is Small ribosomal subunit protein uS2c (rps2) from Nuphar advena (Common spatterdock).